Reading from the N-terminus, the 150-residue chain is Ribonuclease H (150 aa).

The RNase H type-1 domain occupies 3-144 (GEDIVEIYTD…ADALARQGMA (142 aa)). Mg(2+) is bound by residues Asp12, Glu50, Asp72, and Asp136.

Belongs to the RNase H family. Monomer. Mg(2+) serves as cofactor.

Its subcellular location is the cytoplasm. The enzyme catalyses Endonucleolytic cleavage to 5'-phosphomonoester.. In terms of biological role, endonuclease that specifically degrades the RNA of RNA-DNA hybrids. The chain is Ribonuclease H from Parvibaculum lavamentivorans (strain DS-1 / DSM 13023 / NCIMB 13966).